The chain runs to 321 residues: Sideroflexin-3 (321 aa).

The residue at position 1 (M1) is an N-acetylmethionine. 4 helical membrane passes run 146-164, 174-194, 226-246, and 266-286; these read LGTAYVSATTGAVATALGL, LVGRFVPFAAVAAANCINIPL, FQVVISRICMAIPAMAIPPLI, and LQVGLVGFCLVFATPLCCALF.

This sequence belongs to the sideroflexin family.

The protein localises to the mitochondrion membrane. It catalyses the reaction L-serine(in) = L-serine(out). Functionally, mitochondrial serine transporter that mediates transport of serine into mitochondria, an important step of the one-carbon metabolism pathway. Mitochondrial serine is converted to glycine and formate, which then exits to the cytosol where it is used to generate the charged folates that serve as one-carbon donors. The sequence is that of Sideroflexin-3 from Homo sapiens (Human).